A 337-amino-acid polypeptide reads, in one-letter code: Prenyltransferase terC (337 aa).

Mg(2+) contacts are provided by Asp-111 and Asp-115.

It belongs to the FPP/GGPP synthase family. It depends on Mg(2+) as a cofactor.

The protein operates within secondary metabolite biosynthesis. Functionally, prenyltransferase; part of the gene cluster that mediates the biosynthesis of terpendoles, indole-diterpene (IDT) mycotoxins including terpendole I, terpendole K, terpendole C, as well as the kinesin Eg5 inhibitor terpendole E. Terpendoles biosynthesis begins with the synthesis of geranylgeranyl diphosphate (GGPP) by a yet unidentified GGPP synthase. Condensation of indole-3-glycerol phosphate with GGPP by the prenyltransferase terC then forms 3-geranylgeranylindole (3-GGI), followed by epoxidation and cyclization of this intermediate (by the FAD-dependent monooxygeanse terM and the terpene cyclase terB) to form paspaline. The cytochrome monooxygenase terQ then hydroxylates paspalline at C-11 to yield terpendole E. The cytochrome monooxygenase terP converts terpendole E to 13-desoxyterpendole I, and terQ converts 13-desoxyterpendole I into terpendole I. TerF and terK are required for conversion of terpendole I to terpendole C which is further converted to terpendole K. This Tolypocladium album (Soil fungus) protein is Prenyltransferase terC.